Consider the following 210-residue polypeptide: Holliday junction branch migration complex subunit RuvA (210 aa).

Residues 1 to 70 (MISYLKGNPI…DEQPILYGFA (70 aa)) are domain I. The domain II stretch occupies residues 71–149 (TAAERELFRQ…QWRKLVGITL (79 aa)). A flexible linker region spans residues 150-160 (PSTSAIPSLEV). A domain III region spans residues 160–210 (VLEDVEMTLLALGYTNEEINKAISTLSQDNQMLKNTNSEEWIREAIAWLSQ).

It belongs to the RuvA family. As to quaternary structure, homotetramer. Forms an RuvA(8)-RuvB(12)-Holliday junction (HJ) complex. HJ DNA is sandwiched between 2 RuvA tetramers; dsDNA enters through RuvA and exits via RuvB. An RuvB hexamer assembles on each DNA strand where it exits the tetramer. Each RuvB hexamer is contacted by two RuvA subunits (via domain III) on 2 adjacent RuvB subunits; this complex drives branch migration. In the full resolvosome a probable DNA-RuvA(4)-RuvB(12)-RuvC(2) complex forms which resolves the HJ.

It is found in the cytoplasm. Its function is as follows. The RuvA-RuvB-RuvC complex processes Holliday junction (HJ) DNA during genetic recombination and DNA repair, while the RuvA-RuvB complex plays an important role in the rescue of blocked DNA replication forks via replication fork reversal (RFR). RuvA specifically binds to HJ cruciform DNA, conferring on it an open structure. The RuvB hexamer acts as an ATP-dependent pump, pulling dsDNA into and through the RuvAB complex. HJ branch migration allows RuvC to scan DNA until it finds its consensus sequence, where it cleaves and resolves the cruciform DNA. This chain is Holliday junction branch migration complex subunit RuvA, found in Rippkaea orientalis (strain PCC 8801 / RF-1) (Cyanothece sp. (strain PCC 8801)).